A 168-amino-acid chain; its full sequence is Photosystem I assembly protein Ycf3 (168 aa).

TPR repeat units follow at residues 35–68, 72–105, and 120–153; these read AFTYYRDGMSAQSEGNYAEALQNYYEAMRLEIDP, SYILYNIGLIHTSNGEHTKALEYYFRALERNPFL, and GEQAIQQGDSEIAEAWFDQAAEYWKQAIALTPGN.

This sequence belongs to the Ycf3 family.

It is found in the plastid. The protein localises to the chloroplast thylakoid membrane. Essential for the assembly of the photosystem I (PSI) complex. May act as a chaperone-like factor to guide the assembly of the PSI subunits. This Nicotiana sylvestris (Wood tobacco) protein is Photosystem I assembly protein Ycf3.